A 545-amino-acid chain; its full sequence is MLTQLKTYPKLLKHYEEIKEMHMRDWFSKDKERASRYFVQFESLSLDYSKNRLNDTTLKLLFELARDCSLKEKIEAMFKGEKINTTEKRAVLHTALRSLNDTEILLDNMEVLKSVRSVLKRMRAFSDSVRSGKRLGYTNQVITDIVNIGIGGSDLGALMVCTALKRYAHPRLKMHFVSNVDGTQILDVLEKLNPASTLFIVASKTFSTQETLTNALTARKWFVERSGDEKHIAKHFVAVSTNKEAVQQFGIDEHNMFEFWDFVGGRYSLWSAIGLSIMIYLGKKNFNALLKGAYLMDEHFKNAPFESNLPVLMGLIGVWYINFFKSKSHLIAPYDQYLRHFPKFIQQLDMESNGKRISKKGETIPYDTCPVVWGDMGINAQHAFFQLLHQGTHLIPIDFIASLDKKPNAKGHHEILFSNVLAQAQAFMKGKSYEEAFGELLSKGLEKDEAKDLAHHRVFFGNRPSNILLLEKISPSNMGALVALYEHKVFVQGVIWDINSFDQWGVELGKELAVPILQELEGHKSNAFFDSSTKHLIELYKNYNQ.

Residue E351 is the Proton donor of the active site. Residues H382 and K510 contribute to the active site.

The protein belongs to the GPI family.

Its subcellular location is the cytoplasm. The enzyme catalyses alpha-D-glucose 6-phosphate = beta-D-fructose 6-phosphate. The protein operates within carbohydrate biosynthesis; gluconeogenesis. It functions in the pathway carbohydrate degradation; glycolysis; D-glyceraldehyde 3-phosphate and glycerone phosphate from D-glucose: step 2/4. Its function is as follows. Catalyzes the reversible isomerization of glucose-6-phosphate to fructose-6-phosphate. The polypeptide is Glucose-6-phosphate isomerase (Helicobacter acinonychis (strain Sheeba)).